The following is a 448-amino-acid chain: Tubulin beta chain (448 aa).

Gln-11, Glu-69, Ser-138, Gly-142, Thr-143, Gly-144, Asn-204, and Asn-226 together coordinate GTP. Glu-69 serves as a coordination point for Mg(2+).

The protein belongs to the tubulin family. As to quaternary structure, dimer of alpha and beta chains. A typical microtubule is a hollow water-filled tube with an outer diameter of 25 nm and an inner diameter of 15 nM. Alpha-beta heterodimers associate head-to-tail to form protofilaments running lengthwise along the microtubule wall with the beta-tubulin subunit facing the microtubule plus end conferring a structural polarity. Microtubules usually have 13 protofilaments but different protofilament numbers can be found in some organisms and specialized cells. It depends on Mg(2+) as a cofactor.

It is found in the cytoplasm. The protein localises to the cytoskeleton. Tubulin is the major constituent of microtubules, a cylinder consisting of laterally associated linear protofilaments composed of alpha- and beta-tubulin heterodimers. Microtubules grow by the addition of GTP-tubulin dimers to the microtubule end, where a stabilizing cap forms. Below the cap, tubulin dimers are in GDP-bound state, owing to GTPase activity of alpha-tubulin. The polypeptide is Tubulin beta chain (TUB1) (Melampsora lini (Rust fungus)).